Consider the following 83-residue polypeptide: UPF0297 protein DSY2420 (83 aa).

This sequence belongs to the UPF0297 family.

This Desulfitobacterium hafniense (strain Y51) protein is UPF0297 protein DSY2420.